The following is a 438-amino-acid chain: Coenzyme A disulfide reductase (438 aa).

8 to 33 (GAVAGGATCASQIRRLDKESDIIIFE) is an FAD binding site. Substrate-binding residues include threonine 15, glutamine 19, arginine 22, serine 39, and asparagine 42. Catalysis depends on cysteine 43, which acts as the Nucleophile. Catalysis depends on cysteine 43, which acts as the Redox-active. Lysine 71 is a binding site for substrate. NADP(+) is bound at residue 151–166 (VLVVGAGYVSLEVLEN). 267–277 (TNVPNIYAIGD) provides a ligand contact to FAD. Histidine 299 serves as a coordination point for substrate. FAD is bound at residue tyrosine 419. Position 427 (lysine 427) interacts with substrate.

It belongs to the class-III pyridine nucleotide-disulfide oxidoreductase family. As to quaternary structure, homodimer. The cofactor is FAD.

The catalysed reaction is NADP(+) + 2 CoA = CoA-disulfide + NADPH + H(+). In terms of biological role, catalyzes specifically the NADPH-dependent reduction of coenzyme A disulfide. This is Coenzyme A disulfide reductase from Staphylococcus aureus (strain bovine RF122 / ET3-1).